Reading from the N-terminus, the 208-residue chain is Holliday junction branch migration complex subunit RuvA (208 aa).

The segment at 1–64 is domain I; it reads MIGKLKGIVD…EDMIRLYGFR (64 aa). The segment at 65-143 is domain II; it reads VDAEREWFRL…AFAPIDPALI (79 aa). The tract at residues 144 to 152 is flexible linker; the sequence is ALTGAVEDR. The domain III stretch occupies residues 153–208; sequence TAPQPVADAISALVNLGYAQIQASAAIAAALKGLGEEAGTVEAKTLIRLGLRELAR.

This sequence belongs to the RuvA family. As to quaternary structure, homotetramer. Forms an RuvA(8)-RuvB(12)-Holliday junction (HJ) complex. HJ DNA is sandwiched between 2 RuvA tetramers; dsDNA enters through RuvA and exits via RuvB. An RuvB hexamer assembles on each DNA strand where it exits the tetramer. Each RuvB hexamer is contacted by two RuvA subunits (via domain III) on 2 adjacent RuvB subunits; this complex drives branch migration. In the full resolvosome a probable DNA-RuvA(4)-RuvB(12)-RuvC(2) complex forms which resolves the HJ.

It localises to the cytoplasm. Functionally, the RuvA-RuvB-RuvC complex processes Holliday junction (HJ) DNA during genetic recombination and DNA repair, while the RuvA-RuvB complex plays an important role in the rescue of blocked DNA replication forks via replication fork reversal (RFR). RuvA specifically binds to HJ cruciform DNA, conferring on it an open structure. The RuvB hexamer acts as an ATP-dependent pump, pulling dsDNA into and through the RuvAB complex. HJ branch migration allows RuvC to scan DNA until it finds its consensus sequence, where it cleaves and resolves the cruciform DNA. This is Holliday junction branch migration complex subunit RuvA from Methylorubrum extorquens (strain CM4 / NCIMB 13688) (Methylobacterium extorquens).